Consider the following 201-residue polypeptide: 3-isopropylmalate dehydratase small subunit (201 aa).

It belongs to the LeuD family. LeuD type 1 subfamily. In terms of assembly, heterodimer of LeuC and LeuD.

The catalysed reaction is (2R,3S)-3-isopropylmalate = (2S)-2-isopropylmalate. Its pathway is amino-acid biosynthesis; L-leucine biosynthesis; L-leucine from 3-methyl-2-oxobutanoate: step 2/4. Functionally, catalyzes the isomerization between 2-isopropylmalate and 3-isopropylmalate, via the formation of 2-isopropylmaleate. The chain is 3-isopropylmalate dehydratase small subunit from Kineococcus radiotolerans (strain ATCC BAA-149 / DSM 14245 / SRS30216).